Here is a 262-residue protein sequence, read N- to C-terminus: MVTMRDLLECGVHFGHQTRRWNPKMKKFIFGERKGIYIIDLQKTIRYFRYTYNIVRDAAAEGKSVLFVGTKKQAIDAIKEYAEKCGMPYVNHRWLGGMMTNFGTIRQSIRKLEVIETMEEDGSINLLTKKEALMLRRKKEKLIATLGGIRNMKSLPDMIFVVDTVKEKIAVQEANRLKIPVVAPIDTNCDPDVVDYPIPGNDDAIRSVQLFCQEMAEAINEGKSLLEQDGGEQAAGEEVSQDEKDAVVAEAMSEEDFGEDEE.

The segment at 223-262 (KSLLEQDGGEQAAGEEVSQDEKDAVVAEAMSEEDFGEDEE) is disordered. Residues 227–238 (EQDGGEQAAGEE) show a composition bias toward low complexity. The segment covering 252–262 (MSEEDFGEDEE) has biased composition (acidic residues).

Belongs to the universal ribosomal protein uS2 family.

The sequence is that of Small ribosomal subunit protein uS2 from Campylobacter concisus (strain 13826).